A 118-amino-acid polypeptide reads, in one-letter code: Small ribosomal subunit protein uS13 (118 aa).

The interval 91–118 (HRRSLPVRGQRTKTNARTRKGPRKPIKA) is disordered.

The protein belongs to the universal ribosomal protein uS13 family. Part of the 30S ribosomal subunit. Forms a loose heterodimer with protein S19. Forms two bridges to the 50S subunit in the 70S ribosome.

In terms of biological role, located at the top of the head of the 30S subunit, it contacts several helices of the 16S rRNA. In the 70S ribosome it contacts the 23S rRNA (bridge B1a) and protein L5 of the 50S subunit (bridge B1b), connecting the 2 subunits; these bridges are implicated in subunit movement. Contacts the tRNAs in the A and P-sites. The protein is Small ribosomal subunit protein uS13 of Francisella tularensis subsp. tularensis (strain FSC 198).